A 619-amino-acid polypeptide reads, in one-letter code: Sorting nexin-41 (619 aa).

The disordered stretch occupies residues 1-95; the sequence is MWNDEDNNPY…ELVPRRKPGG (95 aa). Residues 108 to 224 enclose the PX domain; sequence PELPILITEA…WRFLDPNSSW (117 aa). Residues arginine 142, serine 144, lysine 168, and arginine 191 each coordinate a 1,2-diacyl-sn-glycero-3-phospho-(1D-myo-inositol-3-phosphate). The segment at 444 to 510 is disordered; that stretch reads YLSSSQQIQP…GSPSHKKAAS (67 aa). Residues 454 to 467 show a composition bias toward basic and acidic residues; sequence PRREPPAQHRRDGS.

This sequence belongs to the sorting nexin family.

The protein localises to the endosome membrane. Its subcellular location is the endomembrane system. Functionally, may be required for cytoplasm to vacuole transport (Cvt) and pexophagy. The chain is Sorting nexin-41 (vsp-6) from Neurospora crassa (strain ATCC 24698 / 74-OR23-1A / CBS 708.71 / DSM 1257 / FGSC 987).